We begin with the raw amino-acid sequence, 655 residues long: Polycyclic ketone monooxygenase (655 aa).

Positions 89, 113, 114, 121, 124, 132, 133, 139, and 183 each coordinate FAD. Thr-277, Thr-280, Thr-301, Lys-425, and Val-452 together coordinate NADPH. A disulfide bond links Cys-424 and Cys-596. FAD-binding residues include Thr-492 and Asn-541. Residue Tyr-600 coordinates NADPH.

This sequence belongs to the FAD-binding monooxygenase family. Requires FAD as cofactor.

Functionally, polycyclic ketone monooxygenase (PockeMO) that displays excellent enantioselectivity, acts on various ketones, and is particularly active on polycyclic molecules. Breaks C-C bonds through the insertion of a single oxygen atom adjacent to a carbonyl moiety, yielding esters or lactones from ketones. PockeMO is able to convert linear ketones (including cyclohexane and to a lesser extend 4-octanone), cyclic ketones (including cyclohexanone and cyclooctanone), bicyclic ketones and polycyclic ketones (steroids). Performs oxidation of the keto functionalities at both the A and D rings of steroids. Particularly, oxidizes the A ring of stanolone or pregnenolone. Selectively oxidizes the D ring of androstenedione or androstadienedione, steroids with keto groups in both the A and D rings, to yield the pharmaceutically relevant testo(lo)lactone. This chain is Polycyclic ketone monooxygenase, found in Thermothelomyces thermophilus (strain ATCC 42464 / BCRC 31852 / DSM 1799) (Sporotrichum thermophile).